The primary structure comprises 333 residues: Foldase protein PrsA (333 aa).

A signal peptide spans 1–22; it reads MKKSTKLLAGIVTLASAMTLAA. Residue Cys23 is the site of N-palmitoyl cysteine attachment. Cys23 carries the S-diacylglycerol cysteine lipid modification. In terms of domain architecture, PpiC spans 145–240; the sequence is TPEMTTQVIT…NKFYIVKVTK (96 aa). The interval 301 to 333 is disordered; the sequence is DKKASKANTSKSDQKTSSDSSKDSQSSKSKSEK. The span at 312-322 shows a compositional bias: basic and acidic residues; the sequence is SDQKTSSDSSK. The segment covering 323 to 333 has biased composition (low complexity); that stretch reads DSQSSKSKSEK.

Belongs to the PrsA family.

The protein localises to the cell membrane. It carries out the reaction [protein]-peptidylproline (omega=180) = [protein]-peptidylproline (omega=0). Functionally, plays a major role in protein secretion by helping the post-translocational extracellular folding of several secreted proteins. The sequence is that of Foldase protein PrsA from Streptococcus equi subsp. zooepidemicus (strain MGCS10565).